Consider the following 169-residue polypeptide: Peptide methionine sulfoxide reductase MsrA (169 aa).

The active site involves Cys13.

The protein belongs to the MsrA Met sulfoxide reductase family.

The enzyme catalyses L-methionyl-[protein] + [thioredoxin]-disulfide + H2O = L-methionyl-(S)-S-oxide-[protein] + [thioredoxin]-dithiol. It carries out the reaction [thioredoxin]-disulfide + L-methionine + H2O = L-methionine (S)-S-oxide + [thioredoxin]-dithiol. In terms of biological role, has an important function as a repair enzyme for proteins that have been inactivated by oxidation. Catalyzes the reversible oxidation-reduction of methionine sulfoxide in proteins to methionine. The sequence is that of Peptide methionine sulfoxide reductase MsrA from Mycolicibacterium gilvum (strain PYR-GCK) (Mycobacterium gilvum (strain PYR-GCK)).